Here is a 280-residue protein sequence, read N- to C-terminus: Cobalt import ATP-binding protein CbiO (280 aa).

Residues 2 to 236 (IEVRDLRFHY…GDWLRQQGLG (235 aa)) form the ABC transporter domain. 36 to 43 (GANGCGKT) contributes to the ATP binding site.

Belongs to the ABC transporter superfamily. Cobalt importer (TC 3.A.1.18.1) family. As to quaternary structure, forms an energy-coupling factor (ECF) transporter complex composed of an ATP-binding protein (A component, CbiO), a transmembrane protein (T component, CbiQ) and 2 possible substrate-capture proteins (S components, CbiM and CbiN) of unknown stoichimetry.

The protein resides in the cell inner membrane. Its pathway is cofactor biosynthesis; adenosylcobalamin biosynthesis. Its function is as follows. Part of the energy-coupling factor (ECF) transporter complex CbiMNOQ involved in cobalt import. Presumably responsible for energy coupling to the transport system. The sequence is that of Cobalt import ATP-binding protein CbiO from Syntrophus aciditrophicus (strain SB).